Here is a 21-residue protein sequence, read N- to C-terminus: Apolipophorin 2 (21 aa).

As to expression, expressed in hemolymph.

The protein resides in the secreted. In terms of biological role, constitutes the major component of lipophorin, which mediates transport for various types of lipids in hemolymph. Acts by forming lipoprotein particles that bind lipoproteins and lipids. This Galleria mellonella (Greater wax moth) protein is Apolipophorin 2.